The chain runs to 489 residues: CBL-interacting serine/threonine-protein kinase 12 (489 aa).

A Protein kinase domain is found at 26 to 280 (YEMGKLLGHG…FPEIMENSWF (255 aa)). Residues 32-40 (LGHGTFAKV) and K55 contribute to the ATP site. D148 (proton acceptor) is an active-site residue. Positions 166–195 (DFGLSAVSDQIRQDGLFHTFCGTPAYVAPE) are activation loop. At S170 the chain carries Phosphoserine. Residue T184 is modified to Phosphothreonine. Positions 336-360 (PRPASLNAFDIISFSQGFDLSGLFD) constitute an NAF domain. Residues 363–392 (GEGSRFVSGAPVSKIISKLEEIAKVVSFTV) are PPI.

This sequence belongs to the protein kinase superfamily. CAMK Ser/Thr protein kinase family. SNF1 subfamily. Interacts with CBL2 and CBL3. Requires Mn(2+) as cofactor. As to expression, expressed in roots and shoots.

The enzyme catalyses L-seryl-[protein] + ATP = O-phospho-L-seryl-[protein] + ADP + H(+). It catalyses the reaction L-threonyl-[protein] + ATP = O-phospho-L-threonyl-[protein] + ADP + H(+). CIPK serine-threonine protein kinases interact with CBL proteins. Binding of a CBL protein to the regulatory NAF domain of CIPK protein lead to the activation of the kinase in a calcium-dependent manner. The protein is CBL-interacting serine/threonine-protein kinase 12 (CIPK12) of Arabidopsis thaliana (Mouse-ear cress).